We begin with the raw amino-acid sequence, 303 residues long: Oxygen-dependent coproporphyrinogen-III oxidase (303 aa).

Ser-93 contributes to the substrate binding site. The a divalent metal cation site is built by His-97 and His-107. His-107 (proton donor) is an active-site residue. 109–111 (NVR) is a substrate binding site. A divalent metal cation is bound by residues His-146 and His-176. The important for dimerization stretch occupies residues 241–276 (YVEFNLVYDRGTLFGLQSGGRTESILMSLPPQVRWG). 259–261 (GGR) contributes to the substrate binding site.

Belongs to the aerobic coproporphyrinogen-III oxidase family. As to quaternary structure, homodimer. Requires a divalent metal cation as cofactor.

The protein resides in the cytoplasm. The catalysed reaction is coproporphyrinogen III + O2 + 2 H(+) = protoporphyrinogen IX + 2 CO2 + 2 H2O. The protein operates within porphyrin-containing compound metabolism; protoporphyrin-IX biosynthesis; protoporphyrinogen-IX from coproporphyrinogen-III (O2 route): step 1/1. Its function is as follows. Involved in the heme biosynthesis. Catalyzes the aerobic oxidative decarboxylation of propionate groups of rings A and B of coproporphyrinogen-III to yield the vinyl groups in protoporphyrinogen-IX. This Pseudomonas putida (strain ATCC 47054 / DSM 6125 / CFBP 8728 / NCIMB 11950 / KT2440) protein is Oxygen-dependent coproporphyrinogen-III oxidase.